Here is a 336-residue protein sequence, read N- to C-terminus: Anthranilate phosphoribosyltransferase (336 aa).

Residues G82, 85–86 (GD), T90, 92–95 (NIST), 110–118 (KHGNRFASG), and S122 contribute to the 5-phospho-alpha-D-ribose 1-diphosphate site. Anthranilate is bound at residue G82. Residue S94 participates in Mg(2+) binding. N113 provides a ligand contact to anthranilate. Residue R168 coordinates anthranilate. Mg(2+)-binding residues include D227 and E228.

It belongs to the anthranilate phosphoribosyltransferase family. Homodimer. Requires Mg(2+) as cofactor.

The enzyme catalyses N-(5-phospho-beta-D-ribosyl)anthranilate + diphosphate = 5-phospho-alpha-D-ribose 1-diphosphate + anthranilate. Its pathway is amino-acid biosynthesis; L-tryptophan biosynthesis; L-tryptophan from chorismate: step 2/5. Its function is as follows. Catalyzes the transfer of the phosphoribosyl group of 5-phosphorylribose-1-pyrophosphate (PRPP) to anthranilate to yield N-(5'-phosphoribosyl)-anthranilate (PRA). This chain is Anthranilate phosphoribosyltransferase, found in Desulfitobacterium hafniense (strain DSM 10664 / DCB-2).